Reading from the N-terminus, the 406-residue chain is Multifunctional CCA protein (406 aa).

2 residues coordinate ATP: Gly-8 and Arg-11. Positions 8 and 11 each coordinate CTP. Mg(2+) contacts are provided by Asp-21 and Asp-23. ATP contacts are provided by Arg-91, Arg-137, and Arg-140. Arg-91, Arg-137, and Arg-140 together coordinate CTP. One can recognise an HD domain in the interval 228–329 (TGIHTLMVAQ…IKILNKFDVW (102 aa)).

This sequence belongs to the tRNA nucleotidyltransferase/poly(A) polymerase family. Bacterial CCA-adding enzyme type 1 subfamily. Monomer. Can also form homodimers and oligomers. The cofactor is Mg(2+). Ni(2+) is required as a cofactor.

The catalysed reaction is a tRNA precursor + 2 CTP + ATP = a tRNA with a 3' CCA end + 3 diphosphate. The enzyme catalyses a tRNA with a 3' CCA end + 2 CTP + ATP = a tRNA with a 3' CCACCA end + 3 diphosphate. Functionally, catalyzes the addition and repair of the essential 3'-terminal CCA sequence in tRNAs without using a nucleic acid template. Adds these three nucleotides in the order of C, C, and A to the tRNA nucleotide-73, using CTP and ATP as substrates and producing inorganic pyrophosphate. tRNA 3'-terminal CCA addition is required both for tRNA processing and repair. Also involved in tRNA surveillance by mediating tandem CCA addition to generate a CCACCA at the 3' terminus of unstable tRNAs. While stable tRNAs receive only 3'-terminal CCA, unstable tRNAs are marked with CCACCA and rapidly degraded. In Vibrio campbellii (strain ATCC BAA-1116), this protein is Multifunctional CCA protein.